The sequence spans 201 residues: Lipopolysaccharide core heptose(II)-phosphate phosphatase (201 aa).

An N-terminal signal peptide occupies residues 1 to 35 (MLAFTLRFIKNKRYFAILAGALVIIAGLTSQHAWS).

It belongs to the phosphoglycerate mutase family. Ais subfamily.

It is found in the periplasm. The protein operates within bacterial outer membrane biogenesis; lipopolysaccharide metabolism. Its function is as follows. Catalyzes the dephosphorylation of heptose(II) of the outer membrane lipopolysaccharide core. This chain is Lipopolysaccharide core heptose(II)-phosphate phosphatase, found in Salmonella enteritidis PT4 (strain P125109).